The sequence spans 145 residues: Large ribosomal subunit protein uL16 (145 aa).

Residues Met1–Met17 are compositionally biased toward basic residues. Positions Met1 to Thr22 are disordered.

This sequence belongs to the universal ribosomal protein uL16 family. Part of the 50S ribosomal subunit.

Binds 23S rRNA and is also seen to make contacts with the A and possibly P site tRNAs. This is Large ribosomal subunit protein uL16 from Ruminiclostridium cellulolyticum (strain ATCC 35319 / DSM 5812 / JCM 6584 / H10) (Clostridium cellulolyticum).